The chain runs to 359 residues: Golgi-resident adenosine 3',5'-bisphosphate 3'-phosphatase (359 aa).

The residue at position 1 (methionine 1) is an N-acetylmethionine. Residues 1-12 are Cytoplasmic-facing; sequence MAPMGIRLSPLG. A helical membrane pass occupies residues 13 to 33; sequence VAVFCLLGLGVLYHLYSGFLA. The Lumenal portion of the chain corresponds to 34–359; sequence GRFSLFGLGG…LPDLEKTGHK (326 aa). A disordered region spans residues 86 to 106; the sequence is ESNVLHEKSKGKTREGAEDKM. Aspartate 110 (proton acceptor) is an active-site residue. Mg(2+) is bound by residues glutamate 133, aspartate 174, leucine 176, and aspartate 177. The Proton acceptor role is filled by threonine 179. 2 residues coordinate AMP: serine 242 and histidine 245. N-linked (GlcNAc...) asparagine glycosylation occurs at asparagine 259. Glycine 268 and lysine 272 together coordinate AMP. Residue aspartate 300 coordinates Mg(2+).

It belongs to the inositol monophosphatase superfamily. It depends on Mg(2+) as a cofactor. In terms of processing, contains N-linked glycan resistant to endoglycosydase H.

It localises to the golgi apparatus. The protein localises to the trans-Golgi network membrane. It carries out the reaction adenosine 3',5'-bisphosphate + H2O = AMP + phosphate. Its pathway is sulfur metabolism. Its activity is regulated as follows. Strongly inhibited by lithium. Its function is as follows. Exhibits 3'-nucleotidase activity toward adenosine 3',5'-bisphosphate (PAP), namely hydrolyzes adenosine 3',5'-bisphosphate into adenosine 5'-monophosphate (AMP) and a phosphate. May play a role in the formation of skeletal elements derived through endochondral ossification, possibly by clearing adenosine 3',5'-bisphosphate produced by Golgi sulfotransferases during glycosaminoglycan sulfation. Has no activity toward 3'-phosphoadenosine 5'-phosphosulfate (PAPS) or inositol phosphate (IP) substrates including I(1)P, I(1,4)P2, I(1,3,4)P3, I(1,4,5)P3 and I(1,3,4,5)P4. The chain is Golgi-resident adenosine 3',5'-bisphosphate 3'-phosphatase from Homo sapiens (Human).